Here is a 227-residue protein sequence, read N- to C-terminus: Lipoprotein-releasing system ATP-binding protein LolD (227 aa).

The ABC transporter domain maps to 7 to 227 (LRLERIGRAY…TLKDGRVVDL (221 aa)). 43-50 (APSGAGKS) serves as a coordination point for ATP.

Belongs to the ABC transporter superfamily. Lipoprotein translocase (TC 3.A.1.125) family. In terms of assembly, the complex is composed of two ATP-binding proteins (LolD) and two transmembrane proteins (LolC and LolE).

The protein resides in the cell inner membrane. In terms of biological role, part of the ABC transporter complex LolCDE involved in the translocation of mature outer membrane-directed lipoproteins, from the inner membrane to the periplasmic chaperone, LolA. Responsible for the formation of the LolA-lipoprotein complex in an ATP-dependent manner. The polypeptide is Lipoprotein-releasing system ATP-binding protein LolD (Brucella abortus biovar 1 (strain 9-941)).